The primary structure comprises 821 residues: E3 ubiquitin-protein ligase RSP5 (821 aa).

Residues 1-112 enclose the C2 domain; it reads MGSNLPAQPN…QMGGDEMLTR (112 aa). Composition is skewed to polar residues over residues 133-144 and 188-201; these read TNLSTPNPNQAN and LNPQRVPSATRPTS. Disordered stretches follow at residues 133-239 and 255-359; these read TNLS…GWER and RTTT…YFVD. Over residues 202–217 the composition is skewed to low complexity; that stretch reads QIAPPNGAPPIANGQG. Residues 231-264 form the WW 1 domain; it reads GRLPAGWERREDNLGRTYYVDHNTRTTTWNRPSA. The segment covering 255–272 has biased composition (polar residues); that stretch reads RTTTWNRPSANYNEQTQR. The span at 281 to 296 shows a compositional bias: basic and acidic residues; sequence LERRAHQNRMLPEDRT. The span at 297–312 shows a compositional bias: polar residues; it reads GASSPNLSETQPQAQT. A compositionally biased stretch (low complexity) spans 320-339; the sequence is ASNSNVVSMMATGATTAGTG. WW domains lie at 339–372 and 399–432; these read GELPPGWEQRTTPEGRPYFVDHNTRTTTWVDPRR and GPLPSGWEMRLTNTARVYFVDHNTKTTTWDDPRL. Positions 488 to 821 constitute an HECT domain; sequence SASDLKKRLM…VEETLGFGQE (334 aa). C789 functions as the Glycyl thioester intermediate in the catalytic mechanism.

It belongs to the RSP5/NEDD4 family. In terms of assembly, interacts with apyA and creD.

It localises to the cytoplasm. It carries out the reaction S-ubiquitinyl-[E2 ubiquitin-conjugating enzyme]-L-cysteine + [acceptor protein]-L-lysine = [E2 ubiquitin-conjugating enzyme]-L-cysteine + N(6)-ubiquitinyl-[acceptor protein]-L-lysine.. The protein operates within protein modification; protein ubiquitination. Its function is as follows. E3 ubiquitin-protein ligase which accepts ubiquitin from an E2 ubiquitin-conjugating enzyme in the form of a thioester and then directly transfers the ubiquitin to targeted substrates. Probably involved in the regulatory network controlling carbon source utilization. Ubiquitinates 'Lys-528' of the uric acid/xanthine transporter uapA at the cell membrane, leading to its internalization, sorting into the endosomal pathway to the vacuolar lumen where it is eventually degraded. The polypeptide is E3 ubiquitin-protein ligase RSP5 (hulA) (Emericella nidulans (strain FGSC A4 / ATCC 38163 / CBS 112.46 / NRRL 194 / M139) (Aspergillus nidulans)).